A 336-amino-acid chain; its full sequence is Fructose-1,6-bisphosphatase class 2 (336 aa).

Mn(2+) contacts are provided by D33, E57, D85, and E88. Residues 88 to 90, Y119, 164 to 166, 186 to 188, and G210 contribute to the substrate site; these read EGT, KPR, and DGD. Mn(2+) is bound at residue E213.

Belongs to the FBPase class 2 family. In terms of assembly, homodimer. Requires Mn(2+) as cofactor.

Its subcellular location is the cytoplasm. It carries out the reaction beta-D-fructose 1,6-bisphosphate + H2O = beta-D-fructose 6-phosphate + phosphate. Its pathway is carbohydrate biosynthesis; gluconeogenesis. Catalyzes the hydrolysis of fructose 1,6-bisphosphate to fructose 6-phosphate. The chain is Fructose-1,6-bisphosphatase class 2 (glpX) from Shigella flexneri.